Reading from the N-terminus, the 240-residue chain is Ribonuclease T2 (240 aa).

The first 19 residues, 1–19 (MRFIAFAVIFSAVYLCSSA), serve as a signal peptide directing secretion. C41 and C46 are oxidised to a cystine. H56 is an active-site residue. Cystine bridges form between C66-C110, C173-C227, and C191-C201. N67 and N73 each carry an N-linked (GlcNAc...) asparagine glycan. Active-site residues include E103 and H107.

It belongs to the RNase T2 family. Ubiquitous.

Its subcellular location is the lysosome lumen. The protein localises to the endoplasmic reticulum lumen. The protein resides in the secreted. The catalysed reaction is a ribonucleotidyl-ribonucleotide-RNA + H2O = a 3'-end 3'-phospho-ribonucleotide-RNA + a 5'-end dephospho-ribonucleoside-RNA + H(+). In terms of biological role, has ribonuclease activity, with higher activity at acidic pH. Probably is involved in lysosomal degradation of ribosomal RNA. The chain is Ribonuclease T2 (rnaset2) from Danio rerio (Zebrafish).